The sequence spans 193 residues: Guanylate kinase (193 aa).

The 180-residue stretch at 12–191 (DLLTIVAGPT…AANELWLAMN (180 aa)) folds into the Guanylate kinase-like domain. 19 to 26 (GPTAVGKG) provides a ligand contact to ATP.

This sequence belongs to the guanylate kinase family.

The protein resides in the cytoplasm. It catalyses the reaction GMP + ATP = GDP + ADP. Its function is as follows. Essential for recycling GMP and indirectly, cGMP. The polypeptide is Guanylate kinase (Tropheryma whipplei (strain TW08/27) (Whipple's bacillus)).